The sequence spans 320 residues: Endochitinase (320 aa).

An N-terminal signal peptide occupies residues Met-1–Ala-23. Residues Glu-24–Ser-64 form the Chitin-binding type-1 domain. 7 cysteine pairs are disulfide-bonded: Cys-26-Cys-41, Cys-35-Cys-47, Cys-40-Cys-54, Cys-58-Cys-62, Cys-101-Cys-163, Cys-175-Cys-182, and Cys-281-Cys-313. The active-site Proton donor is Glu-145.

The protein belongs to the glycosyl hydrolase 19 family. Chitinase class I subfamily.

It carries out the reaction Random endo-hydrolysis of N-acetyl-beta-D-glucosaminide (1-&gt;4)-beta-linkages in chitin and chitodextrins.. Functionally, defense against chitin-containing fungal pathogens. This Pisum sativum (Garden pea) protein is Endochitinase.